The chain runs to 217 residues: ATP-dependent Clp protease proteolytic subunit (217 aa).

The Nucleophile role is filled by Ser-119. His-144 is an active-site residue.

Belongs to the peptidase S14 family. In terms of assembly, fourteen ClpP subunits assemble into 2 heptameric rings which stack back to back to give a disk-like structure with a central cavity, resembling the structure of eukaryotic proteasomes.

The protein localises to the cytoplasm. It catalyses the reaction Hydrolysis of proteins to small peptides in the presence of ATP and magnesium. alpha-casein is the usual test substrate. In the absence of ATP, only oligopeptides shorter than five residues are hydrolyzed (such as succinyl-Leu-Tyr-|-NHMec, and Leu-Tyr-Leu-|-Tyr-Trp, in which cleavage of the -Tyr-|-Leu- and -Tyr-|-Trp bonds also occurs).. In terms of biological role, cleaves peptides in various proteins in a process that requires ATP hydrolysis. Has a chymotrypsin-like activity. Plays a major role in the degradation of misfolded proteins. This chain is ATP-dependent Clp protease proteolytic subunit, found in Bordetella petrii (strain ATCC BAA-461 / DSM 12804 / CCUG 43448).